The sequence spans 422 residues: Protein TEX1 (422 aa).

5 WD repeats span residues 61-100 (ITPN…FDKS), 158-197 (GSKT…SSVC), 207-246 (EDND…LEVC), 251-290 (AHTG…CELI), and 293-332 (DLNS…LLHS). The segment at 388–422 (KRRKNNGGGNNHNKRTSKNTDRIGKDRPSRFNSKK) is disordered. Basic and acidic residues predominate over residues 405-416 (KNTDRIGKDRPS).

This sequence belongs to the THOC3 family. Component of the transcription/export (TREX) complex and the THO complex.

It localises to the nucleus. In terms of biological role, component of the TREX complex, which operates in coupling transcription elongation to mRNA export. This is Protein TEX1 (TEX1) from Saccharomyces cerevisiae (strain ATCC 204508 / S288c) (Baker's yeast).